A 172-amino-acid chain; its full sequence is Protein/nucleic acid deglycase 2 (172 aa).

In terms of domain architecture, PfpI endopeptidase spans 3–171 (KKIAVLITDE…FNREALRLLG (169 aa)). The active-site Nucleophile is the C104.

It belongs to the peptidase C56 family. As to quaternary structure, exists in monomeric, trimeric, and hexameric forms.

It localises to the cytoplasm. The enzyme catalyses N(omega)-(1-hydroxy-2-oxopropyl)-L-arginyl-[protein] + H2O = lactate + L-arginyl-[protein] + H(+). It carries out the reaction N(6)-(1-hydroxy-2-oxopropyl)-L-lysyl-[protein] + H2O = lactate + L-lysyl-[protein] + H(+). The catalysed reaction is S-(1-hydroxy-2-oxopropyl)-L-cysteinyl-[protein] + H2O = lactate + L-cysteinyl-[protein] + H(+). It catalyses the reaction N(omega)-(1-hydroxy-2-oxoethyl)-L-arginyl-[protein] + H2O = L-arginyl-[protein] + glycolate + H(+). The enzyme catalyses N(6)-(1-hydroxy-2-oxoethyl)-L-lysyl-[protein] + H2O = glycolate + L-lysyl-[protein] + H(+). It carries out the reaction S-(1-hydroxy-2-oxoethyl)-L-cysteinyl-[protein] + H2O = glycolate + L-cysteinyl-[protein] + H(+). The catalysed reaction is N(2)-(1-hydroxy-2-oxopropyl)-dGTP + H2O = lactate + dGTP + H(+). It catalyses the reaction N(2)-(1-hydroxy-2-oxopropyl)-GTP + H2O = lactate + GTP + H(+). The enzyme catalyses N(2)-(1-hydroxy-2-oxopropyl)-GDP + H2O = lactate + GDP + H(+). It carries out the reaction N(2)-(1-hydroxy-2-oxopropyl)-GMP + H2O = lactate + GMP + H(+). The catalysed reaction is N(2)-(1-hydroxy-2-oxoethyl)-dGTP + H2O = dGTP + glycolate + H(+). It catalyses the reaction N(2)-(1-hydroxy-2-oxoethyl)-GTP + H2O = glycolate + GTP + H(+). The enzyme catalyses N(2)-(1-hydroxy-2-oxoethyl)-GDP + H2O = glycolate + GDP + H(+). It carries out the reaction N(2)-(1-hydroxy-2-oxoethyl)-GMP + H2O = glycolate + GMP + H(+). The catalysed reaction is an N(2)-(1-hydroxy-2-oxopropyl)-guanosine in RNA + H2O = a guanosine in RNA + lactate + H(+). It catalyses the reaction an N(2)-(1-hydroxy-2-oxopropyl)-2'-deoxyguanosine in DNA + H2O = a 2'-deoxyguanosine in DNA + lactate + H(+). The enzyme catalyses an N(2)-(1-hydroxy-2-oxoethyl)-guanosine in RNA + H2O = a guanosine in RNA + glycolate + H(+). It carries out the reaction an N(2)-(1-hydroxy-2-oxoethyl)-2'-deoxyguanosine in DNA + H2O = a 2'-deoxyguanosine in DNA + glycolate + H(+). Glyoxalase activity is inhibited by zinc ions at pH 7.0. Its function is as follows. Protein and nucleotide deglycase that catalyzes the deglycation of the Maillard adducts formed between amino groups of proteins or nucleotides and reactive carbonyl groups of glyoxals. Thus, functions as a protein deglycase that repairs methylglyoxal- and glyoxal-glycated proteins, and releases repaired proteins and lactate or glycolate, respectively. Deglycates cysteine, arginine and lysine residues in proteins, and thus reactivates these proteins by reversing glycation by glyoxals. Is able to repair glycated serum albumin, collagen, glyceraldehyde-3-phosphate dehydrogenase, and fructose biphosphate aldolase. Acts on early glycation intermediates (hemithioacetals and aminocarbinols), preventing the formation of advanced glycation endproducts (AGE) that cause irreversible damage. Also functions as a nucleotide deglycase able to repair glycated guanine in the free nucleotide pool (GTP, GDP, GMP, dGTP) and in DNA and RNA. Is thus involved in a major nucleotide repair system named guanine glycation repair (GG repair), dedicated to reversing methylglyoxal and glyoxal damage via nucleotide sanitization and direct nucleic acid repair. In vitro, prevents acrylamide formation in asparagine/glyoxal and asparagine/sugar mixtures at 55 degrees Celsius, likely by degrading asparagine/glyoxal Maillard adducts formed at high temperatures. Also displays an apparent glyoxalase activity that in fact reflects its deglycase activity. Is a general stress protein; is required for the protection of bacterial cells against many environmental stresses, including oxidative, thermal, osmotic, UV, and pH stresses. And plays an important role in protection against electrophile/carbonyl stress. The sequence is that of Protein/nucleic acid deglycase 2 (yhbO) from Escherichia coli (strain K12).